The following is a 609-amino-acid chain: Probable translation initiation factor IF-2 (609 aa).

One can recognise a tr-type G domain in the interval 12–230; the sequence is LRQPIVAVLG…VLAGLAQRYM (219 aa). Positions 21–28 are G1; that stretch reads GHVDHGKT. 21–28 serves as a coordination point for GTP; that stretch reads GHVDHGKT. Positions 46 to 50 are G2; that stretch reads QITQH. The segment at 86–89 is G3; the sequence is DTPG. GTP contacts are provided by residues 86-90 and 140-143; these read DTPGH and NKID. Residues 140 to 143 are G4; sequence NKID. The G5 stretch occupies residues 208 to 210; sequence SAK.

This sequence belongs to the TRAFAC class translation factor GTPase superfamily. Classic translation factor GTPase family. IF-2 subfamily.

Functionally, function in general translation initiation by promoting the binding of the formylmethionine-tRNA to ribosomes. Seems to function along with eIF-2. The polypeptide is Probable translation initiation factor IF-2 (Ignicoccus hospitalis (strain KIN4/I / DSM 18386 / JCM 14125)).